The chain runs to 303 residues: Heme A synthase (303 aa).

The Cytoplasmic segment spans residues 1–8; the sequence is MFGKKNLK. The chain crosses the membrane as a helical span at residues 9–29; it reads WLGVVATLMMTFVQLGGALVT. The Extracellular segment spans residues 30 to 67; it reads KTGSADGCGSSWPLCHGALIPEFFPIDTIIELSHRAVS. Cys-37 and Cys-44 are joined by a disulfide. The active site involves Glu-60. His-63 contributes to the heme o binding site. A helical membrane pass occupies residues 68–88; it reads ALSLLMVLWLVITAWKHIGYI. Residues 89–93 lie on the Cytoplasmic side of the membrane; it reads KEIKP. The helical transmembrane segment at 94-114 threads the bilayer; that stretch reads LSIISVGFLLLQALIGAAAVI. Over 115–125 the chain is Extracellular; the sequence is WQQNDYVLALH. His-125 contacts heme o. A helical transmembrane segment spans residues 126–146; sequence FGISLISFSSVFLITLIIFSI. The Cytoplasmic portion of the chain corresponds to 147–163; it reads DQKYEAAELYIKKPLRR. The helical transmembrane segment at 164–184 threads the bilayer; sequence LTWLMAIIIYCGVYTGALVRH. Over 185–215 the chain is Extracellular; that stretch reads ADASLAYGGWPLPFHDLVPHSEQDWVQLTHR. His-214 provides a ligand contact to heme b. A helical membrane pass occupies residues 216-236; sequence IMAFIVFTIIMITYIHAVKNY. At 237-244 the chain is on the cytoplasmic side; that stretch reads PNNRTVHY. Residues 245–265 form a helical membrane-spanning segment; the sequence is GYTAAFILVILQVITGALSIM. Topologically, residues 266 to 270 are extracellular; sequence TNVNL. Residues 271-291 form a helical membrane-spanning segment; the sequence is IIALFHALFITYLFGMTTYFI. His-276 contacts heme b. Residues 292–303 lie on the Cytoplasmic side of the membrane; the sequence is MLMLRSVRSDKQ.

Belongs to the COX15/CtaA family. Type 1 subfamily. As to quaternary structure, interacts with CtaB. Heme b is required as a cofactor.

It is found in the cell membrane. The catalysed reaction is Fe(II)-heme o + 2 A + H2O = Fe(II)-heme a + 2 AH2. It functions in the pathway porphyrin-containing compound metabolism; heme A biosynthesis; heme A from heme O: step 1/1. Catalyzes the conversion of heme O to heme A by two successive hydroxylations of the methyl group at C8. The first hydroxylation forms heme I, the second hydroxylation results in an unstable dihydroxymethyl group, which spontaneously dehydrates, resulting in the formyl group of heme A. The chain is Heme A synthase from Staphylococcus aureus (strain bovine RF122 / ET3-1).